The following is a 307-amino-acid chain: Olfactory receptor 13G1 (307 aa).

At 1–22 (MNHSVVTEFIILGLTKKPELQG) the chain is on the extracellular side. An N-linked (GlcNAc...) asparagine glycan is attached at Asn2. A helical transmembrane segment spans residues 23 to 43 (IIFLFFLIVYLVAFLGNMLII). Over 44-51 (IAKIYNNT) the chain is Cytoplasmic. A helical transmembrane segment spans residues 52–72 (LHTPMYVFLLTLAVVDIICTT). Over 73–96 (SIIPKMLGTMLTSENTISYAGCMS) the chain is Extracellular. Cys94 and Cys186 are disulfide-bonded. The helical transmembrane segment at 97 to 117 (QLFLFTWSLGAEMVLFTTMAY) threads the bilayer. Over 118-136 (DRYVAICFPLHYSTIMNHH) the chain is Cytoplasmic. The chain crosses the membrane as a helical span at residues 137–157 (MCVALLSMVMAIAVTNSWVHT). The Extracellular segment spans residues 158 to 194 (ALIMRLTFCGPNTIDHFFCEIPPLLALSCSPVRINEV). A helical transmembrane segment spans residues 195 to 214 (MVYVADITLAIGDFILTCIS). Over 215–234 (YGFIIVAILRIRTVEGKRKA) the chain is Cytoplasmic. A helical membrane pass occupies residues 235–255 (FSTCSSHLTVVTLYYSPVIYT). At 256–268 (YIRPASSYTFERD) the chain is on the extracellular side. A helical membrane pass occupies residues 269–289 (KVVAALYTLVTPTLNPMVYSF). At 290-307 (QNREMQAGIRKVFAFLKH) the chain is on the cytoplasmic side.

The protein belongs to the G-protein coupled receptor 1 family.

Its subcellular location is the cell membrane. Functionally, odorant receptor. This is Olfactory receptor 13G1 (OR13G1) from Homo sapiens (Human).